The following is a 275-amino-acid chain: Transcriptional coregulator psa-3 (275 aa).

The MEIS N-terminal domain occupies 91–161 (TDDIKRLFQS…RRTVCHEALV (71 aa)). Residues 239–275 (QLPPNFLKPSNEKSPEKSEEEKSQKPSSSPKSPSLSD) form a disordered region. The segment covering 248–262 (SNEKSPEKSEEEKSQ) has biased composition (basic and acidic residues). Residues 263–275 (KPSSSPKSPSLSD) are compositionally biased toward low complexity.

Interacts with homeobox protein ceh-20; the interaction is direct, facilitates nuclear localization of ceh-20 and may stabilize interaction of a ceh-20-nob-1 complex with DNA.

Its subcellular location is the nucleus. Probable transcription coregulator. Required for asymmetric cell divisions of the T hypodermal cells, and cell fate determination, in concert with homeobox proteins nob-1 and ceh-20. Acts downstream of the Wnt signaling pathway, and of ceh-20 and nob-1. This chain is Transcriptional coregulator psa-3, found in Caenorhabditis elegans.